We begin with the raw amino-acid sequence, 69 residues long: DNA-directed RNA polymerase subunit omega (69 aa).

Belongs to the RNA polymerase subunit omega family. As to quaternary structure, the RNAP catalytic core consists of 2 alpha, 1 beta, 1 beta' and 1 omega subunit. When a sigma factor is associated with the core the holoenzyme is formed, which can initiate transcription.

It catalyses the reaction RNA(n) + a ribonucleoside 5'-triphosphate = RNA(n+1) + diphosphate. Its function is as follows. Promotes RNA polymerase assembly. Latches the N- and C-terminal regions of the beta' subunit thereby facilitating its interaction with the beta and alpha subunits. This Symbiobacterium thermophilum (strain DSM 24528 / JCM 14929 / IAM 14863 / T) protein is DNA-directed RNA polymerase subunit omega.